Reading from the N-terminus, the 1368-residue chain is DNA-directed RNA polymerase subunit beta (1368 aa).

It belongs to the RNA polymerase beta chain family. The RNAP catalytic core consists of 2 alpha, 1 beta, 1 beta' and 1 omega subunit. When a sigma factor is associated with the core the holoenzyme is formed, which can initiate transcription.

The catalysed reaction is RNA(n) + a ribonucleoside 5'-triphosphate = RNA(n+1) + diphosphate. DNA-dependent RNA polymerase catalyzes the transcription of DNA into RNA using the four ribonucleoside triphosphates as substrates. This chain is DNA-directed RNA polymerase subunit beta, found in Paraburkholderia phytofirmans (strain DSM 17436 / LMG 22146 / PsJN) (Burkholderia phytofirmans).